The following is a 48-amino-acid chain: DNA-directed RNA polymerase subunit Rpo12 (48 aa).

Positions 9, 26, and 29 each coordinate Zn(2+).

Belongs to the archaeal Rpo12/eukaryotic RPC10 RNA polymerase subunit family. As to quaternary structure, part of the RNA polymerase complex. The cofactor is Zn(2+).

Its subcellular location is the cytoplasm. The catalysed reaction is RNA(n) + a ribonucleoside 5'-triphosphate = RNA(n+1) + diphosphate. In terms of biological role, DNA-dependent RNA polymerase (RNAP) catalyzes the transcription of DNA into RNA using the four ribonucleoside triphosphates as substrates. The protein is DNA-directed RNA polymerase subunit Rpo12 of Sulfurisphaera tokodaii (strain DSM 16993 / JCM 10545 / NBRC 100140 / 7) (Sulfolobus tokodaii).